Reading from the N-terminus, the 263-residue chain is Cell division coordinator CpoB (263 aa).

An N-terminal signal peptide occupies residues 1-26 (MSSNFRHQLLSLSLLVGIAAPWAAFA). Positions 44-88 (QLERISNAHSQLLTQLQQQLSDNQSDIDSLRGQIQENQYQLNQVV) form a coiled coil. Low complexity predominate over residues 106 to 123 (AAAQSTSGDQSGAAASTT). The tract at residues 106 to 139 (AAAQSTSGDQSGAAASTTPTADAGTANAGAPVKS) is disordered. TPR repeat units lie at residues 143 to 176 (NTDY…YPDS), 180 to 213 (PNAN…YPKS), and 217 to 250 (ADAM…YPGT).

The protein belongs to the CpoB family. Homotrimer. Interacts directly with the central domain of TolA and with PBP1B. Binding to TolA disrupts the homotrimer to form a YbgF/TolA heterodimer with weak affinity. Forms a quaternary complex with PBP1B-LpoB and TolA.

The protein localises to the periplasm. Its function is as follows. Mediates coordination of peptidoglycan synthesis and outer membrane constriction during cell division. Promotes physical and functional coordination of the PBP1B-LpoB and Tol machines, and regulates PBP1B activity in response to Tol energy state. The protein is Cell division coordinator CpoB of Escherichia coli (strain K12).